Consider the following 713-residue polypeptide: Transcription activator of gluconeogenesis CPC735_053490 (713 aa).

The tract at residues 1-70 (MTANAINGPV…NAKDPLRPRR (70 aa)) is disordered. Polar residues predominate over residues 19 to 56 (GDNNKSADTTMADQGTRPESQPQGQNNGAKPQNGQTKP). The zn(2)-C6 fungal-type DNA-binding region spans 77–105 (CFACQRAHLTCGDERPCQRCIKRGIQNAC). Positions 145–159 (PLTRNGSNSKTNFYP) are enriched in polar residues. Disordered regions lie at residues 145-229 (PLTR…ASGQ), 274-318 (GAGE…LFGD), 541-564 (GGSS…GMDI), and 623-665 (GTTS…QRKW). A compositionally biased stretch (low complexity) spans 160-171 (QQQSSFNNFYQN). The segment covering 191-212 (FPSQSPVSPTFNMTANPAASGN) has biased composition (polar residues). Over residues 213–229 (QGLPSSLSASNSNASGQ) the composition is skewed to low complexity. Polar residues-rich tracts occupy residues 295–312 (SGTY…TGQP), 541–558 (GGSS…SFTP), and 649–659 (GASNGQSQHSL).

Belongs to the ERT1/acuK family.

It localises to the nucleus. Transcription factor which regulates nonfermentable carbon utilization. Activator of gluconeogenetic genes. The chain is Transcription activator of gluconeogenesis CPC735_053490 from Coccidioides posadasii (strain C735) (Valley fever fungus).